Reading from the N-terminus, the 64-residue chain is Conotoxin VnMLCL-033 (64 aa).

A signal peptide spans 1–19; that stretch reads MLCLPVFIILLLLASPAAP. A propeptide spanning residues 20 to 43 is cleaved from the precursor; sequence NPLQTRIQSNLIRAGPEDANIKTD. Residue Ile63 is modified to Isoleucine amide.

The protein belongs to the conotoxin T superfamily. As to expression, expressed by the venom duct.

Its subcellular location is the secreted. In Conus ventricosus (Mediterranean cone), this protein is Conotoxin VnMLCL-033.